Here is a 479-residue protein sequence, read N- to C-terminus: Probable aspartic-type endopeptidase OPSB (479 aa).

An N-terminal signal peptide occupies residues 1–19 (MRGDSFIWSLTTAASLLYA). Positions 58–393 (SGKTVSQDLD…DLDNNEISIA (336 aa)) constitute a Peptidase A1 domain. Asn68 is a glycosylation site (N-linked (GlcNAc...) asparagine). Asp76 is an active-site residue. A glycan (N-linked (GlcNAc...) asparagine) is linked at Asn121. Asp275 is an active-site residue. Asn398 carries an N-linked (GlcNAc...) asparagine glycan. The interval 435–454 (LSGIETGVPGARPTSRGAAP) is disordered. A lipid anchor (GPI-anchor amidated glycine) is attached at Gly451. A propeptide spans 452-479 (AAPTMRPDVTFGVAAAGLAGAGILFAFM) (removed in mature form).

The protein belongs to the peptidase A1 family.

The protein resides in the cell membrane. Functionally, probable GPI-anchored aspartic-type endopeptidase which contributes to virulence. This Arthroderma otae (strain ATCC MYA-4605 / CBS 113480) (Microsporum canis) protein is Probable aspartic-type endopeptidase OPSB (OPSB).